Reading from the N-terminus, the 636-residue chain is Chaperone protein DnaK (636 aa).

Residue T197 is modified to Phosphothreonine; by autocatalysis. Low complexity predominate over residues 596–607 (LYQQAQEQQQSG). The tract at residues 596 to 636 (LYQQAQEQQQSGSSGGSSDEDVVEDAEIVDEEDEEKRDDNR) is disordered. A compositionally biased stretch (acidic residues) spans 613-636 (SDEDVVEDAEIVDEEDEEKRDDNR).

Belongs to the heat shock protein 70 family.

Its function is as follows. Acts as a chaperone. The chain is Chaperone protein DnaK from Rubrobacter xylanophilus (strain DSM 9941 / JCM 11954 / NBRC 16129 / PRD-1).